The chain runs to 72 residues: Translation initiation factor IF-1 (72 aa).

The region spanning Met-1–Lys-72 is the S1-like domain.

This sequence belongs to the IF-1 family. As to quaternary structure, component of the 30S ribosomal translation pre-initiation complex which assembles on the 30S ribosome in the order IF-2 and IF-3, IF-1 and N-formylmethionyl-tRNA(fMet); mRNA recruitment can occur at any time during PIC assembly.

It is found in the cytoplasm. In terms of biological role, one of the essential components for the initiation of protein synthesis. Stabilizes the binding of IF-2 and IF-3 on the 30S subunit to which N-formylmethionyl-tRNA(fMet) subsequently binds. Helps modulate mRNA selection, yielding the 30S pre-initiation complex (PIC). Upon addition of the 50S ribosomal subunit IF-1, IF-2 and IF-3 are released leaving the mature 70S translation initiation complex. In Leptospira borgpetersenii serovar Hardjo-bovis (strain L550), this protein is Translation initiation factor IF-1.